A 191-amino-acid chain; its full sequence is Fe/S biogenesis protein NfuA (191 aa).

[4Fe-4S] cluster is bound by residues C149 and C152.

The protein belongs to the NfuA family. As to quaternary structure, homodimer. [4Fe-4S] cluster serves as cofactor.

Functionally, involved in iron-sulfur cluster biogenesis. Binds a 4Fe-4S cluster, can transfer this cluster to apoproteins, and thereby intervenes in the maturation of Fe/S proteins. Could also act as a scaffold/chaperone for damaged Fe/S proteins. In Salmonella typhi, this protein is Fe/S biogenesis protein NfuA.